Consider the following 94-residue polypeptide: PTS system galactitol-specific EIIB component (94 aa).

One can recognise a PTS EIIB type-2 domain in the interval 1 to 94 (MKRKIIVACG…QNKILTILQG (94 aa)). Residue C9 is the Phosphocysteine intermediate; for EIIB activity of the active site. At C9 the chain carries Phosphocysteine; by EIIA.

Forms a complex with one each of subunit of GatA, GatB and 2 subunits of GatC.

It localises to the cytoplasm. It carries out the reaction galactitol(out) + N(pros)-phospho-L-histidyl-[protein] = galactitol 1-phosphate(in) + L-histidyl-[protein]. Functionally, the phosphoenolpyruvate-dependent sugar phosphotransferase system (PTS), a major carbohydrate active transport system, catalyzes the phosphorylation of incoming sugar substrates concomitant with their translocation across the cell membrane. The enzyme II complex composed of GatA, GatB and GatC is involved in galactitol transport. It can also use D-glucitol. The polypeptide is PTS system galactitol-specific EIIB component (Escherichia coli (strain K12)).